Reading from the N-terminus, the 435-residue chain is Tol-Pal system protein TolB (435 aa).

The first 24 residues, 1–24, serve as a signal peptide directing secretion; sequence MIPMPKMIRSLLLLFCLLPLGAQA.

It belongs to the TolB family. The Tol-Pal system is composed of five core proteins: the inner membrane proteins TolA, TolQ and TolR, the periplasmic protein TolB and the outer membrane protein Pal. They form a network linking the inner and outer membranes and the peptidoglycan layer.

It is found in the periplasm. Part of the Tol-Pal system, which plays a role in outer membrane invagination during cell division and is important for maintaining outer membrane integrity. This is Tol-Pal system protein TolB from Thioalkalivibrio sulfidiphilus (strain HL-EbGR7).